Here is a 98-residue protein sequence, read N- to C-terminus: NADH-ubiquinone oxidoreductase chain 4L (98 aa).

3 helical membrane-spanning segments follow: residues 1 to 21 (MSLTYMNMFMAFTISLLGLLM), 29 to 49 (SLLCLEGMMLSLFVMMTMTIL), and 61 to 81 (IILLVFAACEAALGLSLLVMV).

It belongs to the complex I subunit 4L family. Core subunit of respiratory chain NADH dehydrogenase (Complex I) which is composed of 45 different subunits.

Its subcellular location is the mitochondrion inner membrane. The enzyme catalyses a ubiquinone + NADH + 5 H(+)(in) = a ubiquinol + NAD(+) + 4 H(+)(out). Functionally, core subunit of the mitochondrial membrane respiratory chain NADH dehydrogenase (Complex I) which catalyzes electron transfer from NADH through the respiratory chain, using ubiquinone as an electron acceptor. Part of the enzyme membrane arm which is embedded in the lipid bilayer and involved in proton translocation. In Stenoderma rufum (Red fruit bat), this protein is NADH-ubiquinone oxidoreductase chain 4L (MT-ND4L).